A 129-amino-acid polypeptide reads, in one-letter code: DNA-directed RNA polymerase subunit omega (129 aa).

The interval 76-101 (EVDEPEPDPVTLAASAADGEDDDQPE) is disordered.

The protein belongs to the RNA polymerase subunit omega family. In terms of assembly, the RNAP catalytic core consists of 2 alpha, 1 beta, 1 beta' and 1 omega subunit. When a sigma factor is associated with the core the holoenzyme is formed, which can initiate transcription.

The enzyme catalyses RNA(n) + a ribonucleoside 5'-triphosphate = RNA(n+1) + diphosphate. Promotes RNA polymerase assembly. Latches the N- and C-terminal regions of the beta' subunit thereby facilitating its interaction with the beta and alpha subunits. This chain is DNA-directed RNA polymerase subunit omega, found in Agrobacterium fabrum (strain C58 / ATCC 33970) (Agrobacterium tumefaciens (strain C58)).